A 116-amino-acid chain; its full sequence is Large ribosomal subunit protein bL20 (116 aa).

This sequence belongs to the bacterial ribosomal protein bL20 family.

Its function is as follows. Binds directly to 23S ribosomal RNA and is necessary for the in vitro assembly process of the 50S ribosomal subunit. It is not involved in the protein synthesizing functions of that subunit. This Mycoplasmopsis synoviae (strain 53) (Mycoplasma synoviae) protein is Large ribosomal subunit protein bL20.